The primary structure comprises 827 residues: Probable inorganic carbon transporter subunit DabA2 (827 aa).

Cysteine 351, aspartate 353, histidine 524, and cysteine 539 together coordinate Zn(2+).

The protein belongs to the inorganic carbon transporter (TC 9.A.2) DabA family. Forms a complex with DabB2, possibly a heterodimer. Requires Zn(2+) as cofactor.

The protein localises to the cell inner membrane. Uptake of inorganic carbon by cells in the presence of thiosulphate is fully inhibited by the uncouplers carbonyl cyanide m-chlorophenyl hydrazone (CCCP), carbonyl cyanide p-trifluoromethoxyphenyl hydrazone (FCCP), S13 or SF6847. Not inhibited by the ATPase inhibitor N,N-dicyclohexylcarbodiimide (DCCD). Inorganic carbon uptake is inhibited by the ionophore CCCP, suggesting uptake is coupled to a cation gradient. Its function is as follows. Part of an energy-coupled inorganic carbon pump; its substrate may be carbon dioxide. Expression of both dabA2 and dabB2 (DAB2) restores growth in ambient air to E.coli deleted of its carbonic anhydrase genes (called CAfree, deletion of 'can' and 'cynT'); neither dabA2 or dabB2 alone is sufficient. Rescue is pH-independent, suggesting it transports CO(2) and not carbonate ions. Together the genes allow greater than normal uptake of inorganic carbon by E.coli. Uptake of carbon dioxide rather than bicarbonate has been suggested based on kinetic calculations. This is Probable inorganic carbon transporter subunit DabA2 from Halothiobacillus neapolitanus (strain ATCC 23641 / c2) (Thiobacillus neapolitanus).